We begin with the raw amino-acid sequence, 632 residues long: Threonine--tRNA ligase (632 aa).

Residues 1-59 (MIRITFLAKQKVEEYSSRVTGFDILQPDISKEAIALRVNGELYDLSREIESDTEIDVIQ) form the TGS domain. The catalytic stretch occupies residues 240 to 532 (DHRRIAKDMD…LIEHYAGKFP (293 aa)). The Zn(2+) site is built by Cys332, His383, and His509.

The protein belongs to the class-II aminoacyl-tRNA synthetase family. In terms of assembly, homodimer. Zn(2+) serves as cofactor.

The protein localises to the cytoplasm. It catalyses the reaction tRNA(Thr) + L-threonine + ATP = L-threonyl-tRNA(Thr) + AMP + diphosphate + H(+). Catalyzes the attachment of threonine to tRNA(Thr) in a two-step reaction: L-threonine is first activated by ATP to form Thr-AMP and then transferred to the acceptor end of tRNA(Thr). Also edits incorrectly charged L-seryl-tRNA(Thr). This chain is Threonine--tRNA ligase, found in Wolbachia sp. subsp. Brugia malayi (strain TRS).